A 146-amino-acid polypeptide reads, in one-letter code: Hemoglobin subunit beta (146 aa).

N-acetylvaline is present on Val1. Residues 2–146 form the Globin domain; sequence HLTAAEKSAI…VANALAHKYH (145 aa). His63 serves as a coordination point for heme b. Residue Lys82 is modified to N6-acetyllysine. His92 lines the heme b pocket. Cys93 is modified (S-nitrosocysteine). Lys144 carries the post-translational modification N6-acetyllysine.

This sequence belongs to the globin family. In terms of assembly, heterotetramer of two alpha chains and two beta chains. In terms of tissue distribution, red blood cells.

In terms of biological role, involved in oxygen transport from the lung to the various peripheral tissues. The chain is Hemoglobin subunit beta (HBB) from Cavia porcellus (Guinea pig).